A 78-amino-acid polypeptide reads, in one-letter code: Large ribosomal subunit protein eL38 (78 aa).

The protein belongs to the eukaryotic ribosomal protein eL38 family.

This is Large ribosomal subunit protein eL38 (RpL38) from Maconellicoccus hirsutus (Pink hibiscus mealybug).